Here is a 336-residue protein sequence, read N- to C-terminus: Ornithine carbamoyltransferase, catabolic (336 aa).

Carbamoyl phosphate-binding positions include 57–60, Q84, R108, and 135–138; these read STRT and HPTQ. L-ornithine contacts are provided by residues N168, D232, and 236–237; that span reads SM. Residues 274 to 275 and R321 contribute to the carbamoyl phosphate site; that span reads CL.

This sequence belongs to the aspartate/ornithine carbamoyltransferase superfamily. OTCase family.

It is found in the cytoplasm. The catalysed reaction is carbamoyl phosphate + L-ornithine = L-citrulline + phosphate + H(+). The protein operates within amino-acid degradation; L-arginine degradation via ADI pathway; carbamoyl phosphate from L-arginine: step 2/2. Functionally, reversibly catalyzes the transfer of the carbamoyl group from carbamoyl phosphate (CP) to the N(epsilon) atom of ornithine (ORN) to produce L-citrulline. The sequence is that of Ornithine carbamoyltransferase, catabolic from Burkholderia pseudomallei (strain K96243).